The chain runs to 194 residues: MSRWTHRTFFIALSAIVTTAGFGSSGCAHGNSSTSESAVPSTFPGISSSITAPPATGLPAPEVLTNVLSRLADPNIPGIDKLPLIESATPDSAVTLDKFSNALRDNGYLPMTFTANNIAWSNKNPSDVLATISVNIAQTNNSVFSFPMEFTPFPPPQQSWQLSKRTADMLLEFGNSSGLTNPAPIKAPTPTPSH.

The signal sequence occupies residues 1 to 26; it reads MSRWTHRTFFIALSAIVTTAGFGSSG. Cys-27 carries N-palmitoyl cysteine lipidation. Cys-27 carries S-diacylglycerol cysteine lipidation. The tract at residues 174–194 is disordered; sequence GNSSGLTNPAPIKAPTPTPSH. Residues 185 to 194 are compositionally biased toward pro residues; it reads IKAPTPTPSH.

Belongs to the MTB12 family.

It localises to the cell membrane. The polypeptide is Putative lipoprotein LppK (lppK) (Mycobacterium leprae (strain TN)).